The sequence spans 154 residues: 3-dehydroquinate dehydratase 2 (154 aa).

Catalysis depends on Tyr23, which acts as the Proton acceptor. Residues Asn79, His85, and Asp92 each coordinate substrate. The Proton donor role is filled by His105. Residues 106–107 (IS) and Arg116 contribute to the substrate site.

The protein belongs to the type-II 3-dehydroquinase family. In terms of assembly, homododecamer.

It catalyses the reaction 3-dehydroquinate = 3-dehydroshikimate + H2O. It functions in the pathway metabolic intermediate biosynthesis; chorismate biosynthesis; chorismate from D-erythrose 4-phosphate and phosphoenolpyruvate: step 3/7. Functionally, catalyzes a trans-dehydration via an enolate intermediate. The sequence is that of 3-dehydroquinate dehydratase 2 (aroQ2) from Ralstonia nicotianae (strain ATCC BAA-1114 / GMI1000) (Ralstonia solanacearum).